The sequence spans 322 residues: Olfactory receptor 11L1 (322 aa).

Residues 1 to 25 lie on the Extracellular side of the membrane; the sequence is MEPQNTSTVTNFQLLGFQNLLEWQA. Asn5 carries N-linked (GlcNAc...) asparagine glycosylation. A helical transmembrane segment spans residues 26 to 46; that stretch reads LLFVIFLLIYCLTIIGNVVII. Over 47–54 the chain is Cytoplasmic; sequence TVVSQGLR. Residues 55-75 traverse the membrane as a helical segment; the sequence is LHSPMYMFLQHLSFLEVWYTS. At 76–99 the chain is on the extracellular side; that stretch reads TTVPLLLANLLSWGQAISFSACMA. Residues Cys97 and Cys189 are joined by a disulfide bond. The chain crosses the membrane as a helical span at residues 100-120; that stretch reads QLYFFVFLGATECFLLAFMAY. Residues 121–139 are Cytoplasmic-facing; it reads DRYLAICSPLRYPFLMHRG. Residues 140 to 160 form a helical membrane-spanning segment; that stretch reads LCARLVVVSWCTGVSTGFLPS. The Extracellular portion of the chain corresponds to 161 to 197; sequence LMISRLDFCGRNQINHFFCDLPPLMQLSCSRVYITEV. A helical transmembrane segment spans residues 198 to 217; the sequence is TIFILSIAVLCICFFLTLGP. The Cytoplasmic portion of the chain corresponds to 218–237; that stretch reads YVFIVSSILRIPSTSGRRKT. Residues 238–258 form a helical membrane-spanning segment; sequence FSTCGSHLAVVTLYYGTMISM. Topologically, residues 259 to 271 are extracellular; sequence YVCPSPHLLPEIN. A helical membrane pass occupies residues 272–292; sequence KIISVFYTVVTPLLNPVIYSL. Residues 293 to 322 lie on the Cytoplasmic side of the membrane; the sequence is RNKDFKEAVRKVMRRKCGILWSTSKRKFLY.

It belongs to the G-protein coupled receptor 1 family.

The protein localises to the cell membrane. Functionally, odorant receptor. This chain is Olfactory receptor 11L1 (OR11L1), found in Homo sapiens (Human).